Here is a 146-residue protein sequence, read N- to C-terminus: Hemoglobin subunit beta-S/F (146 aa).

Valine 1 is modified (N-acetylvaline). Positions 2-146 (HLTDGEKNAI…VANALSHKYH (145 aa)) constitute a Globin domain. Serine 44 is subject to Phosphoserine. Lysine 59 is subject to N6-acetyllysine. Histidine 63 is a binding site for heme b. At lysine 82 the chain carries N6-acetyllysine. Position 92 (histidine 92) interacts with heme b. Position 93 is an S-nitrosocysteine (cysteine 93). Lysine 144 is modified (N6-acetyllysine).

The protein belongs to the globin family. In terms of assembly, heterotetramer of two alpha chains and two beta chains. As to expression, red blood cells.

Its function is as follows. Involved in oxygen transport from the lung to the various peripheral tissues. In Urocitellus townsendii (Townsend's ground squirrel), this protein is Hemoglobin subunit beta-S/F.